The chain runs to 95 residues: Protein TRACHEARY ELEMENT DIFFERENTIATION-RELATED 6 (95 aa).

At 1–3 (MAT) the chain is on the extracellular side. A helical transmembrane segment spans residues 4–24 (IFIVFVSFGCVFVLGIAAFVL). Topologically, residues 25–95 (CCLIKKWKCS…KLGTASTSKA (71 aa)) are cytoplasmic.

As to quaternary structure, interacts with the secondary cell wall (SCW)-related cellulose synthase complex. As to expression, accumulates in cells differentiating into tracheary element (TE) which undergo secondary cell wall (SCW) formation.

The protein resides in the cell membrane. The protein localises to the secreted. It localises to the cell wall. Involved in the secondary cell wall (SCW) formation of vessel elements (e.g. protoxylem and metaxylem), thus promoting tracheary element (TE) differentiation. This is Protein TRACHEARY ELEMENT DIFFERENTIATION-RELATED 6 from Zinnia elegans (Garden zinnia).